Consider the following 618-residue polypeptide: Serine/threonine-protein kinase pkn1 (618 aa).

Residues 15 to 381 form the Protein kinase domain; that stretch reads YKILCYLRKG…KEEVKPQPLF (367 aa). ATP contacts are provided by residues 21–29 and lysine 44; that span reads LRKGLWCQD.

It belongs to the protein kinase superfamily. Ser/Thr protein kinase family. Autophosphorylated on serine and threonine residues.

The enzyme catalyses L-seryl-[protein] + ATP = O-phospho-L-seryl-[protein] + ADP + H(+). The catalysed reaction is L-threonyl-[protein] + ATP = O-phospho-L-threonyl-[protein] + ADP + H(+). Its function is as follows. Together with the serine/threonine kinase PknD, may play a role in the specific interactions with host proteins during intracellular growth. The sequence is that of Serine/threonine-protein kinase pkn1 (pkn1) from Chlamydia caviae (strain ATCC VR-813 / DSM 19441 / 03DC25 / GPIC) (Chlamydophila caviae).